We begin with the raw amino-acid sequence, 216 residues long: Endoplasmic reticulum vesicle protein 25 (216 aa).

The signal sequence occupies residues 1–21; it reads MMVSLKSSLFFMLALLTVVHA. Over 22–184 the chain is Lumenal; it reads LNFDIPAKTN…TNESTNERVK (163 aa). A GOLD domain is found at 34-150; sequence PFCLREYVGE…LEPVEADIRR (117 aa). A helical transmembrane segment spans residues 185–205; the sequence is NFAYLTFISLFVLVIWQILYL. The Cytoplasmic portion of the chain corresponds to 206–216; that stretch reads RSFFQRKHLIP.

Belongs to the EMP24/GP25L family.

It localises to the endoplasmic reticulum membrane. It is found in the golgi apparatus membrane. Constituent of COPII-coated endoplasmic reticulum-derived transport vesicles. Required for efficient transport of a subset of secretory proteins to the Golgi. Facilitates retrograde transport from the Golgi to the endoplasmic reticulum. This Schizosaccharomyces pombe (strain 972 / ATCC 24843) (Fission yeast) protein is Endoplasmic reticulum vesicle protein 25 (erv25).